Consider the following 190-residue polypeptide: Translation initiation factor IF-3 (190 aa).

It belongs to the IF-3 family. Monomer.

It is found in the cytoplasm. Functionally, IF-3 binds to the 30S ribosomal subunit and shifts the equilibrium between 70S ribosomes and their 50S and 30S subunits in favor of the free subunits, thus enhancing the availability of 30S subunits on which protein synthesis initiation begins. This Prochlorococcus marinus (strain MIT 9301) protein is Translation initiation factor IF-3.